We begin with the raw amino-acid sequence, 345 residues long: Molybdate/tungstate import ATP-binding protein WtpC (345 aa).

The region spanning 2 to 231 is the ABC transporter domain; the sequence is LKVESISKDY…PKSEEVARFL (230 aa). 33–40 lines the ATP pocket; it reads GPSGSGKT. Residues 280-345 enclose the Mop domain; the sequence is KTSARNVFKA…FKASAIHVFP (66 aa).

It belongs to the ABC transporter superfamily. Sulfate/tungstate importer (TC 3.A.1.6) family. In terms of assembly, the complex is composed of two ATP-binding proteins (WtpC), two transmembrane proteins (WtpB) and a solute-binding protein (WtpA).

The protein resides in the cell membrane. It catalyses the reaction tungstate(in) + ATP + H2O = tungstate(out) + ADP + phosphate + H(+). Part of the ABC transporter complex WtpABC involved in molybdate/tungstate import. Responsible for energy coupling to the transport system. The protein is Molybdate/tungstate import ATP-binding protein WtpC (wtpC) of Pyrococcus horikoshii (strain ATCC 700860 / DSM 12428 / JCM 9974 / NBRC 100139 / OT-3).